The primary structure comprises 321 residues: Peroxidase 5 (321 aa).

The signal sequence occupies residues 1 to 24; it reads MERFSLRFVLMMVSIILTSSICQA. Pyrrolidone carboxylic acid is present on Gln-25. Intrachain disulfides connect Cys-35-Cys-115, Cys-68-Cys-73, Cys-121-Cys-317, and Cys-201-Cys-227. Catalysis depends on His-66, which acts as the Proton acceptor. Residues Asp-67, Val-70, Gly-72, Asp-74, and Ser-76 each coordinate Ca(2+). Position 164 (Pro-164) interacts with substrate. His-194 contributes to the heme b binding site. Thr-195 provides a ligand contact to Ca(2+). N-linked (GlcNAc...) asparagine glycosylation occurs at Asn-211. Positions 240, 243, and 248 each coordinate Ca(2+). An N-linked (GlcNAc...) asparagine glycan is attached at Asn-285.

The protein belongs to the peroxidase family. Classical plant (class III) peroxidase subfamily. It depends on heme b as a cofactor. Ca(2+) is required as a cofactor.

Its subcellular location is the secreted. The catalysed reaction is 2 a phenolic donor + H2O2 = 2 a phenolic radical donor + 2 H2O. Its function is as follows. Removal of H(2)O(2), oxidation of toxic reductants, biosynthesis and degradation of lignin, suberization, auxin catabolism, response to environmental stresses such as wounding, pathogen attack and oxidative stress. These functions might be dependent on each isozyme/isoform in each plant tissue. The protein is Peroxidase 5 (PER5) of Arabidopsis thaliana (Mouse-ear cress).